Here is a 201-residue protein sequence, read N- to C-terminus: Ribonuclease HII (201 aa).

An RNase H type-2 domain is found at 10 to 200 (LIEAGCDEAG…LGDGQLELFS (191 aa)). 3 residues coordinate a divalent metal cation: D16, E17, and D108.

This sequence belongs to the RNase HII family. Mn(2+) is required as a cofactor. It depends on Mg(2+) as a cofactor.

The protein localises to the cytoplasm. It carries out the reaction Endonucleolytic cleavage to 5'-phosphomonoester.. Endonuclease that specifically degrades the RNA of RNA-DNA hybrids. In Bacteroides fragilis (strain YCH46), this protein is Ribonuclease HII.